The sequence spans 141 residues: Transcription antitermination protein NusB (141 aa).

Belongs to the NusB family.

In terms of biological role, involved in transcription antitermination. Required for transcription of ribosomal RNA (rRNA) genes. Binds specifically to the boxA antiterminator sequence of the ribosomal RNA (rrn) operons. This is Transcription antitermination protein NusB from Desulfotalea psychrophila (strain LSv54 / DSM 12343).